We begin with the raw amino-acid sequence, 132 residues long: Guanyl-specific ribonuclease C2 (132 aa).

The first 26 residues, 1–26 (MLYNKLITIAALLVPALAAPQGLDVR), serve as a signal peptide directing secretion. Disulfide bonds link Cys28–Cys36 and Cys32–Cys129. The active site involves His66. The Proton acceptor role is filled by Glu84. His118 acts as the Proton donor in catalysis.

The protein belongs to the ribonuclease N1/T1 family.

Its subcellular location is the secreted. It catalyses the reaction [RNA] containing guanosine + H2O = an [RNA fragment]-3'-guanosine-3'-phosphate + a 5'-hydroxy-ribonucleotide-3'-[RNA fragment].. The polypeptide is Guanyl-specific ribonuclease C2 (Aspergillus clavatus (strain ATCC 1007 / CBS 513.65 / DSM 816 / NCTC 3887 / NRRL 1 / QM 1276 / 107)).